Consider the following 177-residue polypeptide: Protein GrpE (177 aa).

Composition is skewed to basic and acidic residues over residues 1–19 (MAKH…KETV) and 29–41 (SPEK…ANER). Residues 1 to 41 (MAKHKHEEHPEDVEVKETVETAEQAESASPEKSELELANER) are disordered.

Belongs to the GrpE family. In terms of assembly, homodimer.

Its subcellular location is the cytoplasm. Participates actively in the response to hyperosmotic and heat shock by preventing the aggregation of stress-denatured proteins, in association with DnaK and GrpE. It is the nucleotide exchange factor for DnaK and may function as a thermosensor. Unfolded proteins bind initially to DnaJ; upon interaction with the DnaJ-bound protein, DnaK hydrolyzes its bound ATP, resulting in the formation of a stable complex. GrpE releases ADP from DnaK; ATP binding to DnaK triggers the release of the substrate protein, thus completing the reaction cycle. Several rounds of ATP-dependent interactions between DnaJ, DnaK and GrpE are required for fully efficient folding. The chain is Protein GrpE from Streptococcus gordonii (strain Challis / ATCC 35105 / BCRC 15272 / CH1 / DL1 / V288).